A 302-amino-acid chain; its full sequence is RELT-like protein 2 (302 aa).

A helical membrane pass occupies residues 15-35 (LYMLFLLVLVFFLMGLVGFMI). 4 disordered regions span residues 47–68 (RTSR…DDVN), 135–164 (CSRS…TTVF), 177–212 (RYGL…GQPR), and 247–302 (VPCT…AGGM). At Ser-52 the chain carries Phosphoserine. Basic and acidic residues-rich tracts occupy residues 148–158 (RSKEGKGRPRP) and 177–188 (RYGLHEHRDGSP). Polar residues predominate over residues 277 to 294 (QEANGQPTKLDTSGQQDS).

Belongs to the RELT family. In terms of assembly, interacts with RELT, RELL1, OXSR1, PLSCR1 and TRAF2.

The protein resides in the cell membrane. Induces activation of MAPK14/p38 cascade, when overexpressed. Induces apoptosis, when overexpressed. In Rattus norvegicus (Rat), this protein is RELT-like protein 2 (Rell2).